The following is a 118-amino-acid chain: Large ribosomal subunit protein uL18 (118 aa).

This sequence belongs to the universal ribosomal protein uL18 family. As to quaternary structure, part of the 50S ribosomal subunit; part of the 5S rRNA/L5/L18/L25 subcomplex. Contacts the 5S and 23S rRNAs.

This is one of the proteins that bind and probably mediate the attachment of the 5S RNA into the large ribosomal subunit, where it forms part of the central protuberance. The chain is Large ribosomal subunit protein uL18 from Caulobacter sp. (strain K31).